A 565-amino-acid polypeptide reads, in one-letter code: Periplasmic trehalase (565 aa).

Residues 1–30 (MKSPAPSRPQKMALIPACIFLCFAALSVQA) form the signal peptide. Residues Arg152, 159 to 160 (WD), Asn196, 205 to 207 (RSQ), 277 to 279 (RPE), and Gly310 contribute to the substrate site. Residues Asp312 and Glu496 each act as proton donor/acceptor in the active site. Glu511 is a binding site for substrate. The disordered stretch occupies residues 538–565 (PCDNVPATRPTVKSATTQPSTKEAQPTP). Residues 548–565 (TVKSATTQPSTKEAQPTP) are compositionally biased toward polar residues.

It belongs to the glycosyl hydrolase 37 family. Monomer.

The protein localises to the periplasm. It carries out the reaction alpha,alpha-trehalose + H2O = alpha-D-glucose + beta-D-glucose. Its function is as follows. Provides the cells with the ability to utilize trehalose at high osmolarity by splitting it into glucose molecules that can subsequently be taken up by the phosphotransferase-mediated uptake system. The protein is Periplasmic trehalase of Escherichia coli O8 (strain IAI1).